A 216-amino-acid chain; its full sequence is Histidine biosynthesis bifunctional protein HisIE (216 aa).

A phosphoribosyl-AMP cyclohydrolase region spans residues 1–127 (MSFIDSLSPQ…GKIVAPPGDT (127 aa)). Residues 128 to 216 (LSQVFQVICD…VYRKLQERRR (89 aa)) are phosphoribosyl-ATP pyrophosphohydrolase.

In the N-terminal section; belongs to the PRA-CH family. It in the C-terminal section; belongs to the PRA-PH family.

The protein localises to the cytoplasm. The enzyme catalyses 1-(5-phospho-beta-D-ribosyl)-ATP + H2O = 1-(5-phospho-beta-D-ribosyl)-5'-AMP + diphosphate + H(+). The catalysed reaction is 1-(5-phospho-beta-D-ribosyl)-5'-AMP + H2O = 1-(5-phospho-beta-D-ribosyl)-5-[(5-phospho-beta-D-ribosylamino)methylideneamino]imidazole-4-carboxamide. It functions in the pathway amino-acid biosynthesis; L-histidine biosynthesis; L-histidine from 5-phospho-alpha-D-ribose 1-diphosphate: step 2/9. It participates in amino-acid biosynthesis; L-histidine biosynthesis; L-histidine from 5-phospho-alpha-D-ribose 1-diphosphate: step 3/9. In Nostoc sp. (strain PCC 7120 / SAG 25.82 / UTEX 2576), this protein is Histidine biosynthesis bifunctional protein HisIE (hisI).